We begin with the raw amino-acid sequence, 63 residues long: Conotoxin Cl14.11 (63 aa).

Positions 1 to 21 are cleaved as a signal peptide; that stretch reads MRFLLLLTVALLLTCIMETDA. Residues 22–34 constitute a propeptide that is removed on maturation; that stretch reads EAKPEDLAERFRE.

Post-translationally, contains 2 disulfide bond. Expressed by the venom duct.

The protein resides in the secreted. This Californiconus californicus (California cone) protein is Conotoxin Cl14.11.